The following is a 98-amino-acid chain: Small ribosomal subunit protein uS19 (98 aa).

Positions 77-98 are disordered; it reads TRTYRGHAGGKAEKGGSAPKRK.

Belongs to the universal ribosomal protein uS19 family.

Protein S19 forms a complex with S13 that binds strongly to the 16S ribosomal RNA. In Prosthecochloris aestuarii (strain DSM 271 / SK 413), this protein is Small ribosomal subunit protein uS19.